Consider the following 138-residue polypeptide: MRTLWIMAVLLLGVEGSLIELGKMIFQETGKNPVKNYGLYGCNCGVGNRGKPVDATDRCCFVHKCCYKKVTGCDPKKDRYSYSWENKAIVCGEKNPPCLKQVCECDKAVAICLRENLGTYDKKHRVTVKFLCKAPESC.

An N-terminal signal peptide occupies residues 1–16 (MRTLWIMAVLLLGVEG). 7 cysteine pairs are disulfide-bonded: Cys42/Cys132, Cys44/Cys60, Cys59/Cys112, Cys65/Cys138, Cys66/Cys105, Cys73/Cys98, and Cys91/Cys103. Residues 122–133 (KKHRVTVKFLCK) form an important for membrane-damaging activities in eukaryotes and bacteria; heparin-binding region.

It belongs to the phospholipase A2 family. Group II subfamily. K49 sub-subfamily. Homodimer; non-covalently linked. As to expression, expressed by the venom gland.

The protein localises to the secreted. In terms of biological role, snake venom phospholipase A2 (PLA2) that lacks enzymatic activity. Displays myotoxic activities. A model of myotoxic mechanism has been proposed: an apo Lys49-PLA2 is activated by the entrance of a hydrophobic molecule (e.g. fatty acid) at the hydrophobic channel of the protein leading to a reorientation of a monomer. This reorientation causes a transition between 'inactive' to 'active' states, causing alignment of C-terminal and membrane-docking sites (MDoS) side-by-side and putting the membrane-disruption sites (MDiS) in the same plane, exposed to solvent and in a symmetric position for both monomers. The MDoS region stabilizes the toxin on membrane by the interaction of charged residues with phospholipid head groups. Subsequently, the MDiS region destabilizes the membrane with penetration of hydrophobic residues. This insertion causes a disorganization of the membrane, allowing an uncontrolled influx of ions (i.e. calcium and sodium), and eventually triggering irreversible intracellular alterations and cell death. This is Basic phospholipase A2 homolog G6K49 from Calloselasma rhodostoma (Malayan pit viper).